We begin with the raw amino-acid sequence, 84 residues long: Sulfur carrier protein TusA (84 aa).

Catalysis depends on Cys-21, which acts as the Cysteine persulfide intermediate.

Belongs to the sulfur carrier protein TusA family.

The protein resides in the cytoplasm. Its function is as follows. Sulfur carrier protein which probably makes part of a sulfur-relay system. The polypeptide is Sulfur carrier protein TusA (Pseudomonas syringae pv. tomato (strain ATCC BAA-871 / DC3000)).